The primary structure comprises 153 residues: Regulatory protein RecX (153 aa).

It belongs to the RecX family.

It is found in the cytoplasm. Modulates RecA activity. This is Regulatory protein RecX from Neisseria meningitidis serogroup C / serotype 2a (strain ATCC 700532 / DSM 15464 / FAM18).